A 257-amino-acid polypeptide reads, in one-letter code: Pyridoxal phosphate homeostasis protein (257 aa).

Serine 2 carries the N-acetylserine modification. Lysine 49 is subject to N6-(pyridoxal phosphate)lysine.

It belongs to the pyridoxal phosphate-binding protein YggS/PROSC family.

The protein resides in the cytoplasm. The protein localises to the nucleus. In terms of biological role, pyridoxal 5'-phosphate (PLP)-binding protein, which may be involved in intracellular homeostatic regulation of pyridoxal 5'-phosphate (PLP), the active form of vitamin B6. The protein is Pyridoxal phosphate homeostasis protein of Saccharomyces cerevisiae (strain ATCC 204508 / S288c) (Baker's yeast).